The chain runs to 229 residues: Ribose-5-phosphate isomerase A (229 aa).

Substrate contacts are provided by residues 28-31 (TGST), 85-88 (DGAD), and 98-101 (KGRG). The active-site Proton acceptor is Glu-107. Substrate is bound at residue Lys-125.

This sequence belongs to the ribose 5-phosphate isomerase family. As to quaternary structure, homodimer.

It carries out the reaction aldehydo-D-ribose 5-phosphate = D-ribulose 5-phosphate. Its pathway is carbohydrate degradation; pentose phosphate pathway; D-ribose 5-phosphate from D-ribulose 5-phosphate (non-oxidative stage): step 1/1. Catalyzes the reversible conversion of ribose-5-phosphate to ribulose 5-phosphate. This Thermococcus kodakarensis (strain ATCC BAA-918 / JCM 12380 / KOD1) (Pyrococcus kodakaraensis (strain KOD1)) protein is Ribose-5-phosphate isomerase A.